Consider the following 468-residue polypeptide: Probable protein phosphatase 2C 52 (468 aa).

The PPM-type phosphatase domain maps to 67 to 372 (SSCIFTQQGR…DDCAVVCLFL (306 aa)). The Mn(2+) site is built by aspartate 102, glycine 103, aspartate 317, and aspartate 363. A compositionally biased stretch (polar residues) spans 413 to 429 (RSSSDQENETYGNVNTE). Residues 413–442 (RSSSDQENETYGNVNTETDAEDEKTVGDQN) are disordered.

The protein belongs to the PP2C family. Requires Mg(2+) as cofactor. It depends on Mn(2+) as a cofactor.

The catalysed reaction is O-phospho-L-seryl-[protein] + H2O = L-seryl-[protein] + phosphate. It catalyses the reaction O-phospho-L-threonyl-[protein] + H2O = L-threonyl-[protein] + phosphate. This is Probable protein phosphatase 2C 52 from Arabidopsis thaliana (Mouse-ear cress).